We begin with the raw amino-acid sequence, 145 residues long: MNGRVDYLVSEEEINLTRGPSGLGFNIVGGTDQQYVSNDSGIYVSRIKEDGAAARDGRLQEGDKILSVNGQDLKNLLHQDAVDLFRNAGYAVSLRVQHRLPVQNGPIVHRGDGEPSGVPVAVVLLPVFALTLVAVWAFVRYRKQL.

Topologically, residues 1–117 are cytoplasmic; that stretch reads MNGRVDYLVS…VHRGDGEPSG (117 aa). One can recognise a PDZ domain in the interval 13–100; that stretch reads EINLTRGPSG…AVSLRVQHRL (88 aa). A helical membrane pass occupies residues 118–138; it reads VPVAVVLLPVFALTLVAVWAF. Topologically, residues 139–145 are mitochondrial intermembrane; that stretch reads VRYRKQL.

In terms of assembly, binds (via the PDZ domain) to isoform 2A of SYNJ2 (via the unique motif in the C-terminus). Interacts (via C-terminus) with RALBP1. Interacts (via PDZ domain) with ACVR2A (via C-terminus) and ACVR2B (via C-terminus). Forms a ternary complex with ACVR2A and RALBP1. Interacts with MAPK12. Interacts with DLL1; enhances DLL1 protein stability, and promotes notch signaling in endothelial cells. In terms of tissue distribution, widely expressed.

Its subcellular location is the mitochondrion outer membrane. Regulates endocytosis of activin type 2 receptor kinases through the Ral/RALBP1-dependent pathway and may be involved in suppression of activin-induced signal transduction. The sequence is that of Synaptojanin-2-binding protein (Synj2bp) from Rattus norvegicus (Rat).